Consider the following 61-residue polypeptide: Photosystem II reaction center protein K (61 aa).

A propeptide spanning residues 1–24 (MLNTFSLIGICLNSTLYSSSFFFG) is cleaved from the precursor. A helical membrane pass occupies residues 36–56 (IVDIMPVIPLFFFLLAFVWQA).

The protein belongs to the PsbK family. In terms of assembly, PSII is composed of 1 copy each of membrane proteins PsbA, PsbB, PsbC, PsbD, PsbE, PsbF, PsbH, PsbI, PsbJ, PsbK, PsbL, PsbM, PsbT, PsbX, PsbY, PsbZ, Psb30/Ycf12, at least 3 peripheral proteins of the oxygen-evolving complex and a large number of cofactors. It forms dimeric complexes.

It localises to the plastid. The protein localises to the chloroplast thylakoid membrane. Functionally, one of the components of the core complex of photosystem II (PSII). PSII is a light-driven water:plastoquinone oxidoreductase that uses light energy to abstract electrons from H(2)O, generating O(2) and a proton gradient subsequently used for ATP formation. It consists of a core antenna complex that captures photons, and an electron transfer chain that converts photonic excitation into a charge separation. In Solanum bulbocastanum (Wild potato), this protein is Photosystem II reaction center protein K.